Here is a 742-residue protein sequence, read N- to C-terminus: Conidiogenone synthase (742 aa).

Residues M1 to V332 form a terpene cyclase region. D97 lines the Mg(2+) pocket. Substrate-binding positions include D97, R190–D193, N234, S238–E242, and R328–Y329. The DDXXD 1 motif lies at D97–D101. The NSE/DTE signature appears at N234–E242. The segment at E333–K742 is prenyltransferase. Isopentenyl diphosphate is bound by residues K414, R417, and H446. Mg(2+) is bound by residues D453 and D457. The DDXXD 2 signature appears at D453–D457. A dimethylallyl diphosphate-binding site is contributed by R462. R463 is a binding site for isopentenyl diphosphate. Dimethylallyl diphosphate-binding residues include K539, T540, Q575, N582, K592, and K602. The interval E701–G724 is disordered.

It in the N-terminal section; belongs to the terpene synthase family. The protein in the C-terminal section; belongs to the FPP/GGPP synthase family. As to quaternary structure, hexamer. Requires Mg(2+) as cofactor.

The enzyme catalyses isopentenyl diphosphate + (2E,6E)-farnesyl diphosphate = (2E,6E,10E)-geranylgeranyl diphosphate + diphosphate. The protein operates within secondary metabolite biosynthesis; terpenoid biosynthesis. Functionally, bifunctional terpene synthase; part of the gene cluster that mediates the biosynthesis of conidiogenone, a diterpene known to induce the conidiation. The bifunctional terpene synthase PrDS converts isopentenyl diphosphate (IPP) and dimethylallyl diphosphate (DMAPP) into deoxyconidiogenol. The C-terminal prenyltransferase (PT) domain of PrDS catalyzes formation of GGPP, whereas the N-terminal terpene cyclase (TC) domain catalyzes the cyclization of GGPP into deoxyconidiogenol. The cytochrome P450 monooxygenase PrP450 then catalyzes two rounds of oxidation to furnish conidiogenone. This chain is Conidiogenone synthase, found in Penicillium roqueforti (strain FM164).